The sequence spans 275 residues: Large ribosomal subunit protein uL2 (275 aa).

Residues 222 to 275 are disordered; sequence GVAMNPVDHPHGGGEGRNKGRHPTSPWGQKSKGLKTRHNKRTDNMIIRRRAKKK. The segment covering 229-239 has biased composition (basic and acidic residues); the sequence is DHPHGGGEGRN.

This sequence belongs to the universal ribosomal protein uL2 family. Part of the 50S ribosomal subunit. Forms a bridge to the 30S subunit in the 70S ribosome.

Its function is as follows. One of the primary rRNA binding proteins. Required for association of the 30S and 50S subunits to form the 70S ribosome, for tRNA binding and peptide bond formation. It has been suggested to have peptidyltransferase activity; this is somewhat controversial. Makes several contacts with the 16S rRNA in the 70S ribosome. In Psychrobacter cryohalolentis (strain ATCC BAA-1226 / DSM 17306 / VKM B-2378 / K5), this protein is Large ribosomal subunit protein uL2.